A 441-amino-acid chain; its full sequence is Argininosuccinate lyase (441 aa).

This sequence belongs to the lyase 1 family. Argininosuccinate lyase subfamily.

It localises to the cytoplasm. The catalysed reaction is 2-(N(omega)-L-arginino)succinate = fumarate + L-arginine. Its pathway is amino-acid biosynthesis; L-arginine biosynthesis; L-arginine from L-ornithine and carbamoyl phosphate: step 3/3. The sequence is that of Argininosuccinate lyase from Thermoanaerobacter pseudethanolicus (strain ATCC 33223 / 39E) (Clostridium thermohydrosulfuricum).